A 208-amino-acid chain; its full sequence is uncharacterized protein (208 aa).

The interval Lys-124–Ala-208 is disordered. Basic and acidic residues predominate over residues Thr-133–Glu-170.

The protein resides in the golgi apparatus. This is an uncharacterized protein from Encephalitozoon cuniculi (strain GB-M1) (Microsporidian parasite).